The chain runs to 527 residues: Bifunctional purine biosynthesis protein PurH (527 aa).

Residues 1–149 (MASDFLPVRR…KNFARVAVAT (149 aa)) form the MGS-like domain.

The protein belongs to the PurH family.

It carries out the reaction (6R)-10-formyltetrahydrofolate + 5-amino-1-(5-phospho-beta-D-ribosyl)imidazole-4-carboxamide = 5-formamido-1-(5-phospho-D-ribosyl)imidazole-4-carboxamide + (6S)-5,6,7,8-tetrahydrofolate. The catalysed reaction is IMP + H2O = 5-formamido-1-(5-phospho-D-ribosyl)imidazole-4-carboxamide. Its pathway is purine metabolism; IMP biosynthesis via de novo pathway; 5-formamido-1-(5-phospho-D-ribosyl)imidazole-4-carboxamide from 5-amino-1-(5-phospho-D-ribosyl)imidazole-4-carboxamide (10-formyl THF route): step 1/1. It functions in the pathway purine metabolism; IMP biosynthesis via de novo pathway; IMP from 5-formamido-1-(5-phospho-D-ribosyl)imidazole-4-carboxamide: step 1/1. The sequence is that of Bifunctional purine biosynthesis protein PurH from Xanthomonas oryzae pv. oryzae (strain MAFF 311018).